Consider the following 528-residue polypeptide: Na(+)/H(+) antiporter NhaB (528 aa).

11 consecutive transmembrane segments (helical) span residues 10–30 (IGNFLGNSPKWYKIAILSFLI), 63–83 (YPLQPGGLLAIEAVAIGMTSA), 96–116 (VLLLLVFMVAGIYFMKQLLLF), 131–165 (VSLMFCLTSAFLSAFLDALTVIAVIIAVAVGFYAI), 204–224 (LLMHAGVGTALGGVCTMVGEP), 240–260 (FVIRMSPVTVPVLIAGILTCL), 305–325 (VLVGVWLIAGLALHLASVGLV), 359–379 (LAVFFAVVAVIIDQHLFAPVI), 391–411 (LVIFYIANGLLSMVSDNVFVG), 449–469 (ATPNGQAAFLFLLTSALAPLI), and 476–496 (MVWMALPYTIVLSVVGVLAIE).

This sequence belongs to the NhaB Na(+)/H(+) (TC 2.A.34) antiporter family.

The protein resides in the cell inner membrane. The enzyme catalyses 2 Na(+)(in) + 3 H(+)(out) = 2 Na(+)(out) + 3 H(+)(in). Na(+)/H(+) antiporter that extrudes sodium in exchange for external protons. This is Na(+)/H(+) antiporter NhaB from Shewanella putrefaciens (strain CN-32 / ATCC BAA-453).